The following is a 313-amino-acid chain: MSAVVIEPGVTQRQAGKPAFEANKLSKRLHRLVGQAIGDFNMIEPGDKLMVCVSGGKDSYALLDILLNLQQRAPIDFSLVAVNLDQKQPDFPEHVLPEYLASRGVPFHIENQDTYSIVKRVVPEGKTMCSLCSRLRRGILYRVAGELGATKIALGHHRDDMLQTLFLNMFFGAKLKGMPPKLVSDDGRHVVIRPLAYVPEHDLEAWAAHRQFPIIPCTLCGSQENLQRKQIAQMLRDWERQHPGRLDNMASALANVVPSHLQDRNLYPFTTLQATGRADELGDKAFDDDETCAPPGAASVIEAAMPIRWHGQG.

The short motif at 54 to 59 (SGGKDS) is the PP-loop motif element. Cys129, Cys132, and Cys220 together coordinate [4Fe-4S] cluster.

This sequence belongs to the TtcA family. In terms of assembly, homodimer. Mg(2+) serves as cofactor. Requires [4Fe-4S] cluster as cofactor.

The protein resides in the cytoplasm. The catalysed reaction is cytidine(32) in tRNA + S-sulfanyl-L-cysteinyl-[cysteine desulfurase] + AH2 + ATP = 2-thiocytidine(32) in tRNA + L-cysteinyl-[cysteine desulfurase] + A + AMP + diphosphate + H(+). It participates in tRNA modification. Functionally, catalyzes the ATP-dependent 2-thiolation of cytidine in position 32 of tRNA, to form 2-thiocytidine (s(2)C32). The sulfur atoms are provided by the cysteine/cysteine desulfurase (IscS) system. The protein is tRNA-cytidine(32) 2-sulfurtransferase of Methylibium petroleiphilum (strain ATCC BAA-1232 / LMG 22953 / PM1).